Reading from the N-terminus, the 957-residue chain is Mediator of RNA polymerase II transcription subunit 16 (957 aa).

The disordered stretch occupies residues 855–883; the sequence is YTEVDAAPSGKTNAQGPPQQPQPQQQRRR.

Belongs to the Mediator complex subunit 16 family. As to quaternary structure, component of the Mediator complex.

It localises to the nucleus. Its function is as follows. Component of the Mediator complex, a coactivator involved in the regulated transcription of nearly all RNA polymerase II-dependent genes. Mediator functions as a bridge to convey information from gene-specific regulatory proteins to the basal RNA polymerase II transcription machinery. Mediator is recruited to promoters by direct interactions with regulatory proteins and serves as a scaffold for the assembly of a functional preinitiation complex with RNA polymerase II and the general transcription factors. This Aspergillus clavatus (strain ATCC 1007 / CBS 513.65 / DSM 816 / NCTC 3887 / NRRL 1 / QM 1276 / 107) protein is Mediator of RNA polymerase II transcription subunit 16 (sin4).